Here is a 932-residue protein sequence, read N- to C-terminus: MTTGFLQKIFGSRNQRLVKQYQKTVATINALETQIEKLTDDQLRGKTDEFRQRVAAGESLDKLLPEAFAVCREASRRVLKMRHFDVQMIGGMVLHYGKIAEMRTGEGKTLVATLPVYLNALAGRGVHVVTVNDYLAQRDAEWMARLYNFLGLSVGINLSGMEHDQKQQAYAADITYGTNNEFGFDYLRDNMVYETDARVQRALNFAVVDEVDSILIDEARTPLIISGQAEDHTELYVRMNALPPLLERQIGEEKADGTGVEKPGDYTLDEKARQVFLTESGHEKAERLLAEWGLIGEGESLYAPQNITLMHHVYAALRAHTLFHKDQHYVVQNGEVVIVDEFTGRLMAGRRWSDGLHQAVEAKEHVKIQSENQTLASITFQNYFRMYAKLAGMTGTADTEAYEFNEIYGLETVVIPTNRPPKRIDKQDQIYKTAKERYDAVIRDIRDCYERGQPVLVGTTSIENSELLSHLLKQAGLPHEVLNAKQHEREAAIVAEAGRPKRITIATNMAGRGTDIVLGGNAEKQAAFIEADDAIPADEKARRIQKLHDEWETLHEEVKAAGGLHIIGTERHESRRIDNQLRGRAGRQGDPGSSRFYLSLDDPLLRIFAGDRVRSIMDRLKMPEGEAIEAGIVTRSIESAQRKVEARNFDIRKQLLEYDDVSNDQRKVIYQQRNELLEAHDITETITAMRHGVITEVVRQFVPEGSIEEQWDVPELEEALRNDWQLDLAIQEMVNESSSITAEEILDAVMTAADEQYEAKVAMVGRESFSAFERSVMLQTVDRLWREHLAALDHLRQGIHLRGYAQKNPKQEYKREAFELFAAMLDAIKQEVTRIVMNVQIQSPEQLEEAAEQIEERGGHLENVEYQHADYADAGAPVANVTAAAAATATADMVGSAMTHSGPGGEMPKVGRNDPCPCGSGKKYKQCHGKLS.

ATP is bound by residues Q87, 105 to 109 (GEGKT), and D515. The Zn(2+) site is built by C916, C918, C927, and H928.

It belongs to the SecA family. As to quaternary structure, monomer and homodimer. Part of the essential Sec protein translocation apparatus which comprises SecA, SecYEG and auxiliary proteins SecDF-YajC and YidC. Requires Zn(2+) as cofactor.

The protein resides in the cell inner membrane. It is found in the cytoplasm. It catalyses the reaction ATP + H2O + cellular proteinSide 1 = ADP + phosphate + cellular proteinSide 2.. In terms of biological role, part of the Sec protein translocase complex. Interacts with the SecYEG preprotein conducting channel. Has a central role in coupling the hydrolysis of ATP to the transfer of proteins into and across the cell membrane, serving both as a receptor for the preprotein-SecB complex and as an ATP-driven molecular motor driving the stepwise translocation of polypeptide chains across the membrane. This is Protein translocase subunit SecA from Burkholderia orbicola (strain MC0-3).